Here is a 621-residue protein sequence, read N- to C-terminus: Type 2 DNA topoisomerase 6 subunit B (621 aa).

ATP is bound by residues asparagine 48, aspartate 80, 101 to 102 (SR), 111 to 118 (GQQGIGIS), and lysine 435.

This sequence belongs to the TOP6B family. As to quaternary structure, homodimer. Heterotetramer of two Top6A and two Top6B chains.

It catalyses the reaction ATP-dependent breakage, passage and rejoining of double-stranded DNA.. Relaxes both positive and negative superturns and exhibits a strong decatenase activity. The chain is Type 2 DNA topoisomerase 6 subunit B from Methanosarcina mazei (strain ATCC BAA-159 / DSM 3647 / Goe1 / Go1 / JCM 11833 / OCM 88) (Methanosarcina frisia).